The primary structure comprises 436 residues: 3-ketoacyl-CoA thiolase (436 aa).

Cysteine 99 acts as the Acyl-thioester intermediate in catalysis. Residues histidine 392 and cysteine 422 each act as proton acceptor in the active site.

This sequence belongs to the thiolase-like superfamily. Thiolase family. In terms of assembly, heterotetramer of two alpha chains (FadJ) and two beta chains (FadI).

The protein localises to the cytoplasm. The enzyme catalyses an acyl-CoA + acetyl-CoA = a 3-oxoacyl-CoA + CoA. Its pathway is lipid metabolism; fatty acid beta-oxidation. Functionally, catalyzes the final step of fatty acid oxidation in which acetyl-CoA is released and the CoA ester of a fatty acid two carbons shorter is formed. The protein is 3-ketoacyl-CoA thiolase of Salmonella paratyphi C (strain RKS4594).